The sequence spans 187 residues: 3'-5' DNA exonuclease Cap18 (187 aa).

Positions V9–F173 constitute an Exonuclease domain. Residues D12, M25, H160, and D165 each contribute to the Mg(2+) site. The Proton donor/acceptor role is filled by H160.

This sequence belongs to the Cap18 exonuclease family. In terms of assembly, homodimer.

In terms of biological role, effector component of a CBASS antivirus system. CBASS (cyclic oligonucleotide-based antiphage signaling system) provides immunity against bacteriophage. The CD-NTase protein synthesizes cyclic nucleotides in response to infection; these serve as specific second messenger signals. The signals activate a diverse range of effectors, leading to bacterial cell death and thus abortive phage infection. A type III CBASS system. A sequence non-specific 3'-5' DNA exonuclease that preferentially degrades ssDNA with 3' overhangs or a mismatch at the 3' end. Expression of this CBASS system (Cap17-CapW-CdnC-Cap7-Cap6-Cap18-Cap19) in a susceptible E.coli (strain JP313) confers resistance to bacteriophage lambda cI--. In Escherichia coli, this protein is 3'-5' DNA exonuclease Cap18.